Here is a 111-residue protein sequence, read N- to C-terminus: Nucleoid-associated protein NGK_1136 (111 aa).

It belongs to the YbaB/EbfC family. Homodimer.

It is found in the cytoplasm. Its subcellular location is the nucleoid. Its function is as follows. Binds to DNA and alters its conformation. May be involved in regulation of gene expression, nucleoid organization and DNA protection. This is Nucleoid-associated protein NGK_1136 from Neisseria gonorrhoeae (strain NCCP11945).